A 328-amino-acid polypeptide reads, in one-letter code: Homeobox protein Hox-C13 (328 aa).

The segment at Ala23 to Ser48 is disordered. The span at Gly27–Ser45 shows a compositional bias: gly residues. Positions Gly258–Val317 form a DNA-binding region, homeobox.

Belongs to the Abd-B homeobox family. In terms of tissue distribution, expressed in differentiating keratinocytes. In the hair follicle lower matrix, expressed in all 3 hair shaft-forming compartments, i.e. cuticle, cortex and medulla. Expression stops sharply at the boundary with the germinal matrix compartment.

The protein resides in the nucleus. Its function is as follows. Transcription factor which plays a role in hair follicle differentiation. Regulates FOXQ1 expression and that of other hair-specific genes. The polypeptide is Homeobox protein Hox-C13 (Hoxc13) (Mus musculus (Mouse)).